The following is a 584-amino-acid chain: Keratin, type I cytoskeletal 10 (584 aa).

The span at 1-15 (MSVRYSSSKHYSSSR) shows a compositional bias: low complexity. The interval 1–24 (MSVRYSSSKHYSSSRSGGGGGGGG) is disordered. A head region spans residues 1 to 145 (MSVRYSSSKH…GGDGGLLSGN (145 aa)). Phosphoserine is present on residues serine 14, serine 16, serine 42, serine 53, serine 56, and serine 170. The interval 146–181 (EKVTMQNLNDRLASYLDKVRALEESNYELEGKIKEW) is coil 1A. Residues 146–460 (EKVTMQNLND…SLLEGEGSSG (315 aa)) enclose the IF rod domain. The segment at 182 to 202 (YEKHGNSHQGEPRDYSKYYKT) is linker 1. Residues 203–294 (IDDLKNQILN…KNHEEEMKDL (92 aa)) form a coil 1B region. Positions 295 to 317 (RNVSTGDVNVEMNAAPGVDLTQL) are linker 12. A coil 2 region spans residues 318 to 456 (LNNMRSQYEQ…QTYRSLLEGE (139 aa)). The segment at 453 to 584 (LEGEGSSGGG…GESSSKGPRY (132 aa)) is disordered. The segment covering 457-563 (GSSGGGGRGG…GGGYGGGSSS (107 aa)) has biased composition (gly residues). Positions 457–584 (GSSGGGGRGG…GESSSKGPRY (128 aa)) are tail. Over residues 564–584 (GGHKSSSSGSVGESSSKGPRY) the composition is skewed to low complexity.

This sequence belongs to the intermediate filament family. Heterotetramer of two type I and two type II keratins. Heterodimer with KRT1. Two heterodimers of KRT1 and KRT10 form a heterotetramer. The KRT10 subunit in the heterotetramer is probably disulfide-linked. Interacts with PLEC isoform 1C, when in a heterodimer with KRT1. In terms of assembly, (Microbial infection) Interacts (via C-terminal tail domain) with the S.aureus clumping factor, clfB; this interaction probably mediates S.aureus attachment to the keratinized squamous epithelial cells from the nasal cavity. As to quaternary structure, (Microbial infection) Interacts (via the C-terminal tail domain) with S.pneumoniae serine-rich repeat protein PsrP; this interaction probably mediates S.pneumoniae adherence to lung tissue and subsequent pathogenesis. Neither protein has to be glycosylated for the interaction to occur. As to expression, seen in all suprabasal cell layers including stratum corneum. Expressed on the surface of lung cell lines. Localized on the surface of desquamated nasal epithelial cells (at protein level).

The protein resides in the secreted. The protein localises to the extracellular space. It is found in the cell surface. Its subcellular location is the cytoplasm. Functionally, plays a role in the establishment of the epidermal barrier on plantar skin. Involved in the maintenance of cell layer development and keratin filament bundles in suprabasal cells of the epithelium. In terms of biological role, (Microbial infection) Acts as a mediator of S.aureus adherence to desquamated nasal epithelial cells via clfB, and hence may play a role in nasal colonization. Its function is as follows. (Microbial infection) Binds S.pneumoniae PsrP, mediating adherence of the bacteria to lung cell lines. Reduction of levels of KRT10 keratin decrease adherence, overexpression increases adherence. Neither protein has to be glycosylated for the interaction to occur. In Homo sapiens (Human), this protein is Keratin, type I cytoskeletal 10 (KRT10).